A 265-amino-acid chain; its full sequence is Metallo-beta-lactamase VIM-7 (265 aa).

An N-terminal signal peptide occupies residues 1 to 17; sequence MFQIRSFLVGISAFVMA. Residues His113, His115, Asp117, His178, Cys197, and His239 each coordinate Zn(2+).

The protein belongs to the metallo-beta-lactamase superfamily. Class-B beta-lactamase family. As to quaternary structure, monomer. Requires Zn(2+) as cofactor.

Its subcellular location is the periplasm. It carries out the reaction a beta-lactam + H2O = a substituted beta-amino acid. Functionally, class B beta-lactamase which confers resistance to the beta-lactam antibiotics, including penicillins, cephalosporins and carbapenems. Acts via hydrolysis of the beta-lactam ring. Has penicillin-, cephalosporin- and carbapenem-hydrolyzing activities. This is Metallo-beta-lactamase VIM-7 from Pseudomonas aeruginosa.